The following is a 701-amino-acid chain: Polyribonucleotide nucleotidyltransferase (701 aa).

Residues Asp-487 and Asp-493 each coordinate Mg(2+). In terms of domain architecture, KH spans 554–613 (PTMIAMKIDTDKIRDVIGKGGATIRAICEETKASIDIEDDGSIKIFGETKEAAEAAKQRI). Positions 623–691 (GKIYVGKVER…NRGRIKLSIK (69 aa)) constitute an S1 motif domain.

It belongs to the polyribonucleotide nucleotidyltransferase family. Component of the RNA degradosome, which is a multiprotein complex involved in RNA processing and mRNA degradation. The cofactor is Mg(2+).

The protein localises to the cytoplasm. It catalyses the reaction RNA(n+1) + phosphate = RNA(n) + a ribonucleoside 5'-diphosphate. Involved in mRNA degradation. Catalyzes the phosphorolysis of single-stranded polyribonucleotides processively in the 3'- to 5'-direction. This Pseudomonas putida (strain GB-1) protein is Polyribonucleotide nucleotidyltransferase.